Consider the following 705-residue polypeptide: Elongation factor G (705 aa).

Positions 8–294 (ELYRNFGIMA…SVIDYLPSPL (287 aa)) constitute a tr-type G domain. Residues 17–24 (AHIDAGKT), 92–96 (DTPGH), and 146–149 (NKMD) contribute to the GTP site.

Belongs to the TRAFAC class translation factor GTPase superfamily. Classic translation factor GTPase family. EF-G/EF-2 subfamily.

The protein resides in the cytoplasm. Its function is as follows. Catalyzes the GTP-dependent ribosomal translocation step during translation elongation. During this step, the ribosome changes from the pre-translocational (PRE) to the post-translocational (POST) state as the newly formed A-site-bound peptidyl-tRNA and P-site-bound deacylated tRNA move to the P and E sites, respectively. Catalyzes the coordinated movement of the two tRNA molecules, the mRNA and conformational changes in the ribosome. This Cereibacter sphaeroides (strain KD131 / KCTC 12085) (Rhodobacter sphaeroides) protein is Elongation factor G.